The chain runs to 152 residues: Superoxide dismutase [Cu-Zn] 1 (152 aa).

His45, His47, and His62 together coordinate Cu cation. The cysteines at positions 56 and 145 are disulfide-linked. 4 residues coordinate Zn(2+): His62, His70, His79, and Asp82. His119 serves as a coordination point for Cu cation.

Belongs to the Cu-Zn superoxide dismutase family. Homodimer. The cofactor is Cu cation. It depends on Zn(2+) as a cofactor.

Its subcellular location is the cytoplasm. The catalysed reaction is 2 superoxide + 2 H(+) = H2O2 + O2. Its function is as follows. Destroys radicals which are normally produced within the cells and which are toxic to biological systems. The polypeptide is Superoxide dismutase [Cu-Zn] 1 (SODCC.1) (Mesembryanthemum crystallinum (Common ice plant)).